Consider the following 44-residue polypeptide: Photosystem I reaction center subunit IX 2 (44 aa).

A helical transmembrane segment spans residues 13–35 (APVLATLWLSSTAVILIGVNSYF).

The protein belongs to the PsaJ family.

It localises to the cellular thylakoid membrane. In terms of biological role, may help in the organization of the PsaE and PsaF subunits. This Prochlorococcus marinus (strain NATL2A) protein is Photosystem I reaction center subunit IX 2 (psaJ2).